The primary structure comprises 825 residues: Interleukin-4 receptor subunit alpha (825 aa).

The first 25 residues, 1 to 25 (MGWLCSGLLFPVSCLVLLQVASSGN), serve as a signal peptide directing secretion. Residues 26–232 (MKVLQEPTCV…NSYREPFEQH (207 aa)) are Extracellular-facing. Cysteine 34 and cysteine 44 are oxidised to a cystine. A glycan (N-linked (GlcNAc...) asparagine) is linked at asparagine 53. A disulfide bond links cysteine 74 and cysteine 86. 5 N-linked (GlcNAc...) asparagine glycosylation sites follow: asparagine 98, asparagine 128, asparagine 134, asparagine 176, and asparagine 209. Residues 125-224 (APGNLTVHTN…WSPSTKWHNS (100 aa)) form the Fibronectin type-III domain. The short motif at 212-216 (WSEWS) is the WSXWS motif element. A helical transmembrane segment spans residues 233–256 (LLLGVSVSCIVILAVCLLCYVSIT). The Cytoplasmic segment spans residues 257–825 (KIKKEWWDQI…SVGPTYMRVS (569 aa)). Positions 262–270 (WWDQIPNPA) match the Box 1 motif motif. Disordered regions lie at residues 373–397 (EEEE…DFQE) and 433–485 (LPPS…LTCT). Positions 437–557 (GSTSAHMPWD…ETWEQILRRN (121 aa)) are required for IRS1 activation and IL4-induced cell growth. Over residues 475–485 (PTQSPDNLTCT) the composition is skewed to polar residues. Tyrosine 497, tyrosine 575, tyrosine 603, and tyrosine 631 each carry phosphotyrosine. The interval 558-657 (VLQHGAAAAP…VPVPLFTFGL (100 aa)) is required for IL4-induced gene expression. The tract at residues 651–703 (PLFTFGLDREPPRSPQSSHLPSSSPEHLGLEPGEKVEDMPKPPLPQEQATDPL) is disordered. Positions 665 to 677 (PQSSHLPSSSPEH) are enriched in low complexity. A compositionally biased stretch (basic and acidic residues) spans 678-690 (LGLEPGEKVEDMP). Positions 711–716 (IVYSAL) match the ITIM motif motif. Residues 782–809 (PSGISEKSKSSSSFHPAPGNAQSSSQTP) are disordered.

The protein belongs to the type I cytokine receptor family. Type 4 subfamily. As to quaternary structure, the functional IL4 receptor is formed by initial binding of IL4 to IL4R. Subsequent recruitment to the complex of the common gamma chain, in immune cells, creates a type I receptor and, in non-immune cells, of IL13RA1 forms a type II receptor. IL4R can also interact with the IL13/IL13RA1 complex to form a similar type II receptor. Interacts with PIK3C3. Interacts with the SH2-containing phosphatases, PTPN6/SHIP1, PTPN11/SHIP2 and INPP5D/SHIP. Interacts with JAK1 through a Box 1-containing region; inhibited by SOCS5. Interacts with SOCS5; inhibits IL4 signaling. Interacts with JAK3. Interacts with CLM1. Interacts with IL13RA2. On IL4 binding, phosphorylated on C-terminal tyrosine residues. Phosphorylation on any one of tyrosine residues, Tyr-575, Tyr-603 or Tyr-631, is required for STAT6-induced gene induction. Post-translationally, the soluble form (sIL4R/IL4BP) can also be produced by proteolytic cleavage at the cell surface (shedding) by a metalloproteinase. In terms of tissue distribution, isoform 1 and isoform 2 are highly expressed in activated T-cells.

The protein resides in the cell membrane. It localises to the secreted. In terms of biological role, receptor for both interleukin 4 and interleukin 13. Couples to the JAK1/2/3-STAT6 pathway. The IL4 response is involved in promoting Th2 differentiation. The IL4/IL13 responses are involved in regulating IgE production and, chemokine and mucus production at sites of allergic inflammation. In certain cell types, can signal through activation of insulin receptor substrates, IRS1/IRS2. Functionally, soluble IL4R (sIL4R) inhibits IL4-mediated cell proliferation and IL5 up-regulation by T-cells. The protein is Interleukin-4 receptor subunit alpha (IL4R) of Homo sapiens (Human).